The primary structure comprises 337 residues: Phosphoribosylformylglycinamidine cyclo-ligase (337 aa).

The protein belongs to the AIR synthase family.

Its subcellular location is the cytoplasm. It carries out the reaction 2-formamido-N(1)-(5-O-phospho-beta-D-ribosyl)acetamidine + ATP = 5-amino-1-(5-phospho-beta-D-ribosyl)imidazole + ADP + phosphate + H(+). Its pathway is purine metabolism; IMP biosynthesis via de novo pathway; 5-amino-1-(5-phospho-D-ribosyl)imidazole from N(2)-formyl-N(1)-(5-phospho-D-ribosyl)glycinamide: step 2/2. This chain is Phosphoribosylformylglycinamidine cyclo-ligase, found in Gloeobacter violaceus (strain ATCC 29082 / PCC 7421).